The following is a 38-amino-acid chain: Potassium channel toxin alpha-KTx 3.7 (38 aa).

3 disulfides stabilise this stretch: cysteine 8/cysteine 28, cysteine 14/cysteine 33, and cysteine 18/cysteine 35.

It belongs to the short scorpion toxin superfamily. Potassium channel inhibitor family. Alpha-KTx 03 subfamily. Expressed by the venom gland.

The protein localises to the secreted. Its function is as follows. Blocks voltage-gated potassium channels Kv1.1/KCNA1 (IC(50)=0.6 nM), Kv1.2/KCNA2 (IC(50)=5.4 nM), Kv1.3/KCNA3 (IC(50)=0.014 nM) potently, and moderately block intermediate conductance calcium-activated potassium channels KCa3.1/KCNN4 (IC(50)=225 nM). Also shows activity on muscle-type nicotinic acetylcholine receptor (nAChR), since it reversibly and dose-dependently inhibits acetylcholine-induced current through mouse muscle-type nAChR heterologously expressed in Xenopus oocytes (IC(50)=1.6 uM). The polypeptide is Potassium channel toxin alpha-KTx 3.7 (Orthochirus scrobiculosus (Central Asian scorpion)).